We begin with the raw amino-acid sequence, 253 residues long: 2,3-bisphosphoglycerate-dependent phosphoglycerate mutase (253 aa).

Substrate-binding positions include 12–19 (RHGESEWN), 25–26 (TG), Arg64, 91–94 (ERHY), Lys102, 118–119 (RR), and 187–188 (GN). His13 functions as the Tele-phosphohistidine intermediate in the catalytic mechanism. Residue Glu91 is the Proton donor/acceptor of the active site.

This sequence belongs to the phosphoglycerate mutase family. BPG-dependent PGAM subfamily.

The catalysed reaction is (2R)-2-phosphoglycerate = (2R)-3-phosphoglycerate. Its pathway is carbohydrate degradation; glycolysis; pyruvate from D-glyceraldehyde 3-phosphate: step 3/5. Its function is as follows. Catalyzes the interconversion of 2-phosphoglycerate and 3-phosphoglycerate. In Streptomyces griseus subsp. griseus (strain JCM 4626 / CBS 651.72 / NBRC 13350 / KCC S-0626 / ISP 5235), this protein is 2,3-bisphosphoglycerate-dependent phosphoglycerate mutase.